A 489-amino-acid polypeptide reads, in one-letter code: 3-octaprenyl-4-hydroxybenzoate carboxy-lyase (489 aa).

Position 172 (asparagine 172) interacts with Mn(2+). Prenylated FMN-binding positions include 175-177 (IYR), 189-191 (RWL), and 194-195 (RG). Glutamate 238 provides a ligand contact to Mn(2+). The Proton donor role is filled by aspartate 287.

The protein belongs to the UbiD family. Homohexamer. Prenylated FMN is required as a cofactor. Mn(2+) serves as cofactor.

Its subcellular location is the cell membrane. The catalysed reaction is a 4-hydroxy-3-(all-trans-polyprenyl)benzoate + H(+) = a 2-(all-trans-polyprenyl)phenol + CO2. It functions in the pathway cofactor biosynthesis; ubiquinone biosynthesis. In terms of biological role, catalyzes the decarboxylation of 3-octaprenyl-4-hydroxy benzoate to 2-octaprenylphenol, an intermediate step in ubiquinone biosynthesis. The polypeptide is 3-octaprenyl-4-hydroxybenzoate carboxy-lyase (Aeromonas hydrophila subsp. hydrophila (strain ATCC 7966 / DSM 30187 / BCRC 13018 / CCUG 14551 / JCM 1027 / KCTC 2358 / NCIMB 9240 / NCTC 8049)).